The following is a 521-amino-acid chain: Cytochrome P450 1A1 (521 aa).

A substrate-binding site is contributed by Phe-229. Cys-463 contacts heme.

This sequence belongs to the cytochrome P450 family. Heme serves as cofactor.

Its subcellular location is the endoplasmic reticulum membrane. It localises to the microsome membrane. The catalysed reaction is an organic molecule + reduced [NADPH--hemoprotein reductase] + O2 = an alcohol + oxidized [NADPH--hemoprotein reductase] + H2O + H(+). In terms of biological role, cytochromes P450 are a group of heme-thiolate monooxygenases. They oxidize a variety of structurally unrelated compounds, including steroids, fatty acids, and xenobiotics. The polypeptide is Cytochrome P450 1A1 (cyp1a1) (Limanda limanda (Common dab)).